Reading from the N-terminus, the 351-residue chain is Phosphoribosylformylglycinamidine cyclo-ligase (351 aa).

The protein belongs to the AIR synthase family.

The protein resides in the cytoplasm. It carries out the reaction 2-formamido-N(1)-(5-O-phospho-beta-D-ribosyl)acetamidine + ATP = 5-amino-1-(5-phospho-beta-D-ribosyl)imidazole + ADP + phosphate + H(+). It functions in the pathway purine metabolism; IMP biosynthesis via de novo pathway; 5-amino-1-(5-phospho-D-ribosyl)imidazole from N(2)-formyl-N(1)-(5-phospho-D-ribosyl)glycinamide: step 2/2. The chain is Phosphoribosylformylglycinamidine cyclo-ligase from Burkholderia mallei (strain NCTC 10247).